The primary structure comprises 142 residues: Large ribosomal subunit protein uL11 (142 aa).

It belongs to the universal ribosomal protein uL11 family. As to quaternary structure, part of the ribosomal stalk of the 50S ribosomal subunit. Interacts with L10 and the large rRNA to form the base of the stalk. L10 forms an elongated spine to which L12 dimers bind in a sequential fashion forming a multimeric L10(L12)X complex. One or more lysine residues are methylated.

In terms of biological role, forms part of the ribosomal stalk which helps the ribosome interact with GTP-bound translation factors. This Desulforudis audaxviator (strain MP104C) protein is Large ribosomal subunit protein uL11.